Here is a 165-residue protein sequence, read N- to C-terminus: MTLEEFSAGEQKTERMDKVGDALEEVLSKALSQRTITVGVYEAAKLLNVDPDNVVLCLLAADEDDDRDVALQIHFTLIQAFCCENDINILRVSNPGRLAELLLLETDASPAASEGAEQPPDLHCVLVTNPHSSQWKDPALSQLICFCRESRYMDQWVPVINLPER.

Position 2 is a phosphothreonine (Thr2).

The protein belongs to the GADD45 family. As to quaternary structure, interacts with AURKA, PCNA, GADD45GIP1 and MAPK14.

It is found in the nucleus. Functionally, might affect PCNA interaction with some CDK (cell division protein kinase) complexes; stimulates DNA excision repair in vitro and inhibits entry of cells into S phase. In T-cells, functions as a regulator of p38 MAPKs by inhibiting p88 phosphorylation and activity. The sequence is that of Growth arrest and DNA damage-inducible protein GADD45 alpha (GADD45A) from Felis catus (Cat).